Consider the following 161-residue polypeptide: Endoribonuclease YbeY (161 aa).

Positions 120, 124, and 130 each coordinate Zn(2+).

This sequence belongs to the endoribonuclease YbeY family. Zn(2+) is required as a cofactor.

The protein resides in the cytoplasm. Functionally, single strand-specific metallo-endoribonuclease involved in late-stage 70S ribosome quality control and in maturation of the 3' terminus of the 16S rRNA. The chain is Endoribonuclease YbeY from Erythrobacter litoralis (strain HTCC2594).